A 360-amino-acid chain; its full sequence is NAD(P)H-quinone oxidoreductase subunit 1, chloroplastic (360 aa).

The next 8 membrane-spanning stretches (helical) occupy residues V27–I47, F98–F118, I129–G149, A165–L185, F203–L223, F253–I273, V297–I317, and F340–L360.

It belongs to the complex I subunit 1 family. In terms of assembly, NDH is composed of at least 16 different subunits, 5 of which are encoded in the nucleus.

It localises to the plastid. The protein resides in the chloroplast thylakoid membrane. It catalyses the reaction a plastoquinone + NADH + (n+1) H(+)(in) = a plastoquinol + NAD(+) + n H(+)(out). It carries out the reaction a plastoquinone + NADPH + (n+1) H(+)(in) = a plastoquinol + NADP(+) + n H(+)(out). In terms of biological role, NDH shuttles electrons from NAD(P)H:plastoquinone, via FMN and iron-sulfur (Fe-S) centers, to quinones in the photosynthetic chain and possibly in a chloroplast respiratory chain. The immediate electron acceptor for the enzyme in this species is believed to be plastoquinone. Couples the redox reaction to proton translocation, and thus conserves the redox energy in a proton gradient. In Draba nemorosa (Woodland whitlowgrass), this protein is NAD(P)H-quinone oxidoreductase subunit 1, chloroplastic.